The chain runs to 197 residues: Xanthine phosphoribosyltransferase (197 aa).

Positions 20 and 27 each coordinate xanthine. 128–132 (ANGQA) lines the 5-phospho-alpha-D-ribose 1-diphosphate pocket. Lys-156 provides a ligand contact to xanthine.

It belongs to the purine/pyrimidine phosphoribosyltransferase family. Xpt subfamily. As to quaternary structure, homodimer.

It is found in the cytoplasm. It carries out the reaction XMP + diphosphate = xanthine + 5-phospho-alpha-D-ribose 1-diphosphate. It participates in purine metabolism; XMP biosynthesis via salvage pathway; XMP from xanthine: step 1/1. Its function is as follows. Converts the preformed base xanthine, a product of nucleic acid breakdown, to xanthosine 5'-monophosphate (XMP), so it can be reused for RNA or DNA synthesis. The chain is Xanthine phosphoribosyltransferase from Bacillus cereus (strain ATCC 14579 / DSM 31 / CCUG 7414 / JCM 2152 / NBRC 15305 / NCIMB 9373 / NCTC 2599 / NRRL B-3711).